Reading from the N-terminus, the 866-residue chain is Dynamin-2 (866 aa).

The Dynamin-type G domain occupies 28-294 (HLDLPQIAVV…LTNHIRESLP (267 aa)). A G1 motif region spans residues 38–45 (GGQSAGKS). GDP-binding residues include Ser41, Gly43, Lys44, Ser45, Ser46, Arg59, and Gly60. Residues 64–66 (VTR) are G2 motif. Positions 136–139 (DLPG) are G3 motif. The segment at 205–208 (TKLD) is G4 motif. Residues Lys206, Asp208, and Asp211 each contribute to the GDP site. A Phosphotyrosine modification is found at Tyr231. A G5 motif region spans residues 235 to 238 (VNRS). GDP-binding residues include Asn236, Arg237, and Gln239. Lys299 carries the N6-acetyllysine modification. The region spanning 515-621 (QVIRRGWLTI…WKASFLRAGV (107 aa)) is the PH domain. Tyr593 is subject to Phosphotyrosine. The residue at position 594 (Lys594) is an N6-acetyllysine. Positions 649-740 (VETIRNLVDS…IIGDISTSTV (92 aa)) constitute a GED domain. Residues 737 to 866 (TSTVSTPVPP…IRPAEPSLLD (130 aa)) form a disordered region. Thr751 is subject to Phosphothreonine. Over residues 752–763 (WIQNTSSHSPTP) the composition is skewed to polar residues. Phosphoserine; by CDK1 is present on Ser760. Pro residues-rich tracts occupy residues 784–794 (TPGPPLIPVPV), 802–811 (PPIPSRPGPH), and 822–851 (SAPPQIPSRPARIPPGIPPGVPSRRPPAAP).

The protein belongs to the TRAFAC class dynamin-like GTPase superfamily. Dynamin/Fzo/YdjA family. Oligomerizes into a helical polymer that self-assembles around the vesicle membrane, when associated to the menbrane through lipid binding. Interacts with SHANK1 and SHANK2. Interacts with SNX9. Interacts (via C-terminal proline-rich domain (PRD)) with SNX18 (via SH3 domain); this interaction regulates ATG9A and ATG16L1 trafficking from recycling endosomes to sites of autophagosome formation. Interacts with SNX33 (via SH3 domain). Interacts with MYO1E (via SH3 domain). Interacts with PSTPIP1 (via SH3 domain). Interacts with CTNND2. Interacts (via C-terminal proline-rich domain (PRD)) with BIN1 (via SH3 domain); this interaction allows the recruitment of DNM2 to the membrane tubules and inhibits self-assembly-stimulated GTPase activity on the membrane. Interacts with GABARAP, GABARAPL1 and GABARAPL2. Interacts with MAP1LC3B (the lipidate and non-lipidated LC3 form); this interaction mediates recycling endosome scission leading to autophagosome release. Interacts with ITSN1. Interacts with MYOF. Interacts (via C-terminal proline-rich domain (PRD)) with SH3BP4 (via SH3 domain); this interaction controls the GTPase activity and is prevented by EGFR-induced tyrosine phosphorylation of either DNM2 or SH3BP4. May interact with PIK3C3. May be a component of a complex composed of RAB5A (in GDP-bound form), DYN2 and PIK3C3. Interacts with SDC4; this interaction is markedly enhanced at focal ahesion site upon induction of focal adhesions and stress-fiber formation. Interacts with ACTN1. Interacts with CTTN; this interaction stimulates the intrinsic GTPase activity of DNM2 and stabilizes the association of DNM2 and actin filaments; in addition this interaction is stimulated by ligand binding to the receptor, leading to the recruitment of the DNM2-CTTN complex to the sequestered receptor-ligand complex to its internalization. Interacts with NOSTRIN (via SH3 domain); this interaction allows the recruitment of NOS3 to dynamin-positive structures. Interacts with TUBG1; this interaction may participate in centrosome cohesion. In terms of processing, phosphorylation at Ser-844 by GSK3-alpha relieves the inhibition of BIN1 and promotes endocytosis. Phosphorylation at Ser-760 by CDK1 is greatly increased upon mitotic entry. It regulates cytokinesis downstream of calcineurin, and does not affect clathrin-mediated endocytosis. Dephosphorylated by calcineurin/PP2 during cytokinesis in a Ca(2+)- and calmodulin-dependent manner. Phosphorylated on tyrosine residues by EGFR and after activation of SRC.

It localises to the cytoplasm. Its subcellular location is the cytoskeleton. The protein localises to the cytoplasmic vesicle. The protein resides in the clathrin-coated vesicle. It is found in the cell projection. It localises to the uropodium. Its subcellular location is the endosome. The protein localises to the microtubule organizing center. The protein resides in the centrosome. It is found in the centriole. It localises to the recycling endosome. Its subcellular location is the phagocytic cup. The protein localises to the phagosome membrane. The protein resides in the podosome. It is found in the cell junction. It localises to the postsynaptic density. Its subcellular location is the synapse. The protein localises to the synaptosome. The protein resides in the midbody. It is found in the membrane. It localises to the clathrin-coated pit. It carries out the reaction GTP + H2O = GDP + phosphate + H(+). Catalyzes the hydrolysis of GTP and utilizes this energy to mediate vesicle scission at plasma membrane during endocytosis and filament remodeling at many actin structures during organization of the actin cytoskeleton. Plays an important role in vesicular trafficking processes, namely clathrin-mediated endocytosis (CME), exocytic and clathrin-coated vesicle from the trans-Golgi network, and PDGF stimulated macropinocytosis. During vesicular trafficking process, associates to the membrane, through lipid binding, and self-assembles into ring-like structure through oligomerization to form a helical polymer around the vesicle membrane and leading to vesicle scission. Plays a role in organization of the actin cytoskeleton by mediating arrangement of stress fibers and actin bundles in podocytes. During organization of the actin cytoskeleton, self-assembles into ring-like structure that directly bundles actin filaments to form typical membrane tubules decorated with dynamin spiral polymers. Self-assembly increases GTPase activity and the GTP hydrolysis causes the rapid depolymerization of dynamin spiral polymers, and results in dispersion of actin bundles. Remodels, through its interaction with CTTN, bundled actin filaments in a GTPase-dependent manner and plays a role in orchestrating the global actomyosin cytoskeleton. The interaction with CTTN stabilizes the interaction of DNM2 and actin filaments and stimulates the intrinsic GTPase activity that results in actin filament-barbed ends and increases the sensitivity of filaments in bundles to the actin depolymerizing factor, CFL1. Plays a role in the autophagy process, by participating in the formation of ATG9A vesicles destined for the autophagosomes through its interaction with SNX18, by mediating recycling endosome scission leading to autophagosome release through MAP1LC3B interaction. Also regulates maturation of apoptotic cell corpse-containing phagosomes by recruiting PIK3C3 to the phagosome membrane. Also plays a role in cytokinesis. May participate in centrosome cohesion through its interaction with TUBG1. Plays a role in the regulation of neuron morphology, axon growth and formation of neuronal growth cones. Involved in membrane tubulation. The protein is Dynamin-2 of Bos taurus (Bovine).